A 419-amino-acid polypeptide reads, in one-letter code: Gustatory receptor for sugar taste 64c (419 aa).

Residues 1–15 (MQQSGQKGTRNTLQH) lie on the Cytoplasmic side of the membrane. A helical membrane pass occupies residues 16–36 (AIGPVLVIAQFFGVLPVAGVW). The Extracellular portion of the chain corresponds to 37-48 (PSCRPERVRFRW). Residues 49-69 (ISLSLLAALILFVFSIVDCAL) form a helical membrane-spanning segment. The Cytoplasmic portion of the chain corresponds to 70 to 82 (SSKVVFDHGLKIY). A helical transmembrane segment spans residues 83–103 (TIGSLSFSVICIFCFGVFLLL). At 104 to 139 (SRRWPYIIRRTAECEQIFLEPEYDCSYGRGYSSRLR) the chain is on the extracellular side. A helical membrane pass occupies residues 140 to 160 (LWGVCMLVAALCEHSTYVGSA). At 161–204 (LYNNHLAIVECKLDANFWQNYFQRERQQLFLIMHFTAWWIPFIE) the chain is on the cytoplasmic side. The helical transmembrane segment at 205–225 (WTTLSMTFVWNFVDIFLILIC) threads the bilayer. Over 226 to 305 (RGMQMRFQQM…FQSKGNYADE (80 aa)) the chain is Extracellular. Residues 306-326 (LYFWFCLSYVIIRVLNMMFAA) traverse the membrane as a helical segment. Topologically, residues 327–377 (SSIPQEAKEISYTLYEIPTEFWCVELRRLNEIFLSDHFALSGKGYFLLTRR) are cytoplasmic. Residues 378–398 (LIFAMAATLMVYELVLINQMA) traverse the membrane as a helical segment. The Extracellular segment spans residues 399–419 (GSEVQKSFCEGGVGSSKSIFS).

The protein belongs to the insect chemoreceptor superfamily. Gustatory receptor (GR) family. Gr5a subfamily. As to expression, expressed in Gr5a-expressing sugar-sensing cells.

Its subcellular location is the cell membrane. In terms of biological role, one of the few identified sugar gustatory receptors identified so far and which promotes the starvation-induced increase of feeding motivation. The polypeptide is Gustatory receptor for sugar taste 64c (Gr64c) (Drosophila melanogaster (Fruit fly)).